Consider the following 592-residue polypeptide: UvrABC system protein C (592 aa).

In terms of domain architecture, GIY-YIG spans 15–92; that stretch reads ALPGCYLMKD…IQKHQPYFNI (78 aa). The region spanning 197 to 232 is the UVR domain; the sequence is DNVKKDLTEKMATAAQEMQFERAAELRDQLRYIEAT.

It belongs to the UvrC family. In terms of assembly, interacts with UvrB in an incision complex.

It localises to the cytoplasm. Functionally, the UvrABC repair system catalyzes the recognition and processing of DNA lesions. UvrC both incises the 5' and 3' sides of the lesion. The N-terminal half is responsible for the 3' incision and the C-terminal half is responsible for the 5' incision. This Latilactobacillus sakei subsp. sakei (strain 23K) (Lactobacillus sakei subsp. sakei) protein is UvrABC system protein C.